The sequence spans 505 residues: 2,3-bisphosphoglycerate-independent phosphoglycerate mutase (505 aa).

The Mn(2+) site is built by D12 and S62. S62 acts as the Phosphoserine intermediate in catalysis. Residues H123, 153–154, R185, R191, 257–260, and K330 contribute to the substrate site; these read RD and RPDR. Residues D397, H401, D438, H439, and H456 each contribute to the Mn(2+) site.

The protein belongs to the BPG-independent phosphoglycerate mutase family. Monomer. It depends on Mn(2+) as a cofactor.

The catalysed reaction is (2R)-2-phosphoglycerate = (2R)-3-phosphoglycerate. It functions in the pathway carbohydrate degradation; glycolysis; pyruvate from D-glyceraldehyde 3-phosphate: step 3/5. Its function is as follows. Catalyzes the interconversion of 2-phosphoglycerate and 3-phosphoglycerate. The protein is 2,3-bisphosphoglycerate-independent phosphoglycerate mutase of Staphylococcus epidermidis (strain ATCC 35984 / DSM 28319 / BCRC 17069 / CCUG 31568 / BM 3577 / RP62A).